The primary structure comprises 567 residues: Urease subunit alpha (567 aa).

The Urease domain maps to 129–567 (GGIDSHIHFI…LPLAQRYFLF (439 aa)). Ni(2+)-binding residues include H134, H136, and K217. Residue K217 is modified to N6-carboxylysine. Position 219 (H219) interacts with substrate. Ni(2+)-binding residues include H246 and H272. H320 serves as the catalytic Proton donor. D360 contributes to the Ni(2+) binding site.

It belongs to the metallo-dependent hydrolases superfamily. Urease alpha subunit family. In terms of assembly, heterotrimer of UreA (gamma), UreB (beta) and UreC (alpha) subunits. Three heterotrimers associate to form the active enzyme. It depends on Ni cation as a cofactor. In terms of processing, carboxylation allows a single lysine to coordinate two nickel ions.

The protein resides in the cytoplasm. The enzyme catalyses urea + 2 H2O + H(+) = hydrogencarbonate + 2 NH4(+). The protein operates within nitrogen metabolism; urea degradation; CO(2) and NH(3) from urea (urease route): step 1/1. The protein is Urease subunit alpha of Pseudomonas putida (strain W619).